Reading from the N-terminus, the 610-residue chain is UvrABC system protein C (610 aa).

One can recognise a GIY-YIG domain in the interval 16–94 (SQPGVYRMYD…IKLYQPRYNV (79 aa)). The 36-residue stretch at 204 to 239 (DQVLTQLISRMETASQNLEFEEAARIRDQIQAVRRV) folds into the UVR domain.

Belongs to the UvrC family. As to quaternary structure, interacts with UvrB in an incision complex.

It is found in the cytoplasm. The UvrABC repair system catalyzes the recognition and processing of DNA lesions. UvrC both incises the 5' and 3' sides of the lesion. The N-terminal half is responsible for the 3' incision and the C-terminal half is responsible for the 5' incision. The sequence is that of UvrABC system protein C from Shigella boydii serotype 18 (strain CDC 3083-94 / BS512).